Consider the following 323-residue polypeptide: Arginase (323 aa).

4 residues coordinate Mn(2+): His119, Asp142, His144, and Asp146. Substrate is bound by residues 144 to 148 (HADIN), 155 to 157 (SKN), and Asp198. The Mn(2+) site is built by Asp247 and Asp249. Residues Thr261 and Glu292 each coordinate substrate.

It belongs to the arginase family. As to quaternary structure, homotrimer. Requires Mn(2+) as cofactor.

It carries out the reaction L-arginine + H2O = urea + L-ornithine. It participates in nitrogen metabolism; urea cycle; L-ornithine and urea from L-arginine: step 1/1. The polypeptide is Arginase (aru1) (Schizosaccharomyces pombe (strain 972 / ATCC 24843) (Fission yeast)).